A 76-amino-acid chain; its full sequence is uORF2 protein (76 aa).

In terms of biological role, plays a role in viral replication. In Zika virus (isolate ZIKV/Human/French Polynesia/10087PF/2013) (ZIKV), this protein is uORF2 protein.